Consider the following 650-residue polypeptide: Macrolide export ATP-binding/permease protein MacB (650 aa).

Residues 6–244 (LKLTGITRRF…ASSPEAASSP (239 aa)) form the ABC transporter domain. Residue 42–49 (GASGSGKS) coordinates ATP. The disordered stretch occupies residues 227–246 (QTRPEEATASSPEAASSPAT). Over residues 233-246 (ATASSPEAASSPAT) the composition is skewed to low complexity. 4 consecutive transmembrane segments (helical) span residues 275-295 (FLTMLGIIIGIASVVSVVALG), 523-543 (LTLLVSMIALISLLVGGIGVM), 580-600 (LVCLFGGIAGVALSLAIGVLF), and 615-635 (SIIAAFLCSSLIGIIFGFFPA).

This sequence belongs to the ABC transporter superfamily. Macrolide exporter (TC 3.A.1.122) family. As to quaternary structure, homodimer. Part of the tripartite efflux system MacAB-TolC, which is composed of an inner membrane transporter, MacB, a periplasmic membrane fusion protein, MacA, and an outer membrane component, TolC. The complex forms a large protein conduit and can translocate molecules across both the inner and outer membranes. Interacts with MacA.

The protein localises to the cell inner membrane. Part of the tripartite efflux system MacAB-TolC. MacB is a non-canonical ABC transporter that contains transmembrane domains (TMD), which form a pore in the inner membrane, and an ATP-binding domain (NBD), which is responsible for energy generation. Confers resistance against macrolides. The protein is Macrolide export ATP-binding/permease protein MacB of Pectobacterium atrosepticum (strain SCRI 1043 / ATCC BAA-672) (Erwinia carotovora subsp. atroseptica).